The following is a 142-amino-acid chain: Endoribonuclease YbeY (142 aa).

Zn(2+) contacts are provided by His107, His111, and Asp117.

The protein belongs to the endoribonuclease YbeY family. It depends on Zn(2+) as a cofactor.

It is found in the cytoplasm. Its function is as follows. Single strand-specific metallo-endoribonuclease involved in late-stage 70S ribosome quality control and in maturation of the 3' terminus of the 16S rRNA. This Chlorobium phaeobacteroides (strain DSM 266 / SMG 266 / 2430) protein is Endoribonuclease YbeY.